A 308-amino-acid polypeptide reads, in one-letter code: Methionyl-tRNA formyltransferase (308 aa).

110-113 (SLLP) lines the (6S)-5,6,7,8-tetrahydrofolate pocket.

Belongs to the Fmt family.

It catalyses the reaction L-methionyl-tRNA(fMet) + (6R)-10-formyltetrahydrofolate = N-formyl-L-methionyl-tRNA(fMet) + (6S)-5,6,7,8-tetrahydrofolate + H(+). Attaches a formyl group to the free amino group of methionyl-tRNA(fMet). The formyl group appears to play a dual role in the initiator identity of N-formylmethionyl-tRNA by promoting its recognition by IF2 and preventing the misappropriation of this tRNA by the elongation apparatus. In Neisseria meningitidis serogroup C (strain 053442), this protein is Methionyl-tRNA formyltransferase.